The following is a 258-amino-acid chain: Protease HtpX homolog (258 aa).

A run of 2 helical transmembrane segments spans residues 24–44 and 45–65; these read VLLF…LGLG and GPLF…LISP. Histidine 146 contributes to the Zn(2+) binding site. Glutamate 147 is a catalytic residue. Histidine 150 is a Zn(2+) binding site. Helical transmembrane passes span 157–177 and 186–206; these read IVMT…WSTV and LVGI…LFIS. Residue glutamate 210 participates in Zn(2+) binding.

The protein belongs to the peptidase M48B family. The cofactor is Zn(2+).

It is found in the cell membrane. This chain is Protease HtpX homolog, found in Methanothermobacter thermautotrophicus (strain ATCC 29096 / DSM 1053 / JCM 10044 / NBRC 100330 / Delta H) (Methanobacterium thermoautotrophicum).